We begin with the raw amino-acid sequence, 234 residues long: Large ribosomal subunit protein uL1 (234 aa).

The protein belongs to the universal ribosomal protein uL1 family. In terms of assembly, part of the 50S ribosomal subunit.

In terms of biological role, binds directly to 23S rRNA. The L1 stalk is quite mobile in the ribosome, and is involved in E site tRNA release. Functionally, protein L1 is also a translational repressor protein, it controls the translation of the L11 operon by binding to its mRNA. This Serratia proteamaculans (strain 568) protein is Large ribosomal subunit protein uL1.